The sequence spans 192 residues: Imidazoleglycerol-phosphate dehydratase (192 aa).

The protein belongs to the imidazoleglycerol-phosphate dehydratase family.

The protein localises to the cytoplasm. The enzyme catalyses D-erythro-1-(imidazol-4-yl)glycerol 3-phosphate = 3-(imidazol-4-yl)-2-oxopropyl phosphate + H2O. It functions in the pathway amino-acid biosynthesis; L-histidine biosynthesis; L-histidine from 5-phospho-alpha-D-ribose 1-diphosphate: step 6/9. In Staphylococcus saprophyticus subsp. saprophyticus (strain ATCC 15305 / DSM 20229 / NCIMB 8711 / NCTC 7292 / S-41), this protein is Imidazoleglycerol-phosphate dehydratase.